A 147-amino-acid polypeptide reads, in one-letter code: Protein YjdN (147 aa).

This Escherichia coli (strain K12) protein is Protein YjdN (yjdN).